We begin with the raw amino-acid sequence, 316 residues long: tRNA dimethylallyltransferase (316 aa).

17 to 24 (GPTASGKT) lines the ATP pocket. Residue 19-24 (TASGKT) coordinates substrate. Interaction with substrate tRNA regions lie at residues 42–45 (DSAL), 166–170 (QRLSR), and 247–252 (RCVGYR).

This sequence belongs to the IPP transferase family. In terms of assembly, monomer. Requires Mg(2+) as cofactor.

The catalysed reaction is adenosine(37) in tRNA + dimethylallyl diphosphate = N(6)-dimethylallyladenosine(37) in tRNA + diphosphate. In terms of biological role, catalyzes the transfer of a dimethylallyl group onto the adenine at position 37 in tRNAs that read codons beginning with uridine, leading to the formation of N6-(dimethylallyl)adenosine (i(6)A). The chain is tRNA dimethylallyltransferase from Salmonella paratyphi C (strain RKS4594).